The primary structure comprises 229 residues: Cytochrome c oxidase subunit 2 (229 aa).

Residues 1–26 (MATWAQFGLQDASSPLMEELTYFHDY) are Mitochondrial intermembrane-facing. Residues 27–48 (ALIVLTLITILVFYGLVSLLLS) form a helical membrane-spanning segment. The Mitochondrial matrix segment spans residues 49-62 (SSTNRFFLEGQELE). Residues 63-82 (TIWTVVPAFILIFIALPSLQ) traverse the membrane as a helical segment. The Mitochondrial intermembrane portion of the chain corresponds to 83 to 229 (LLYLMDEVNN…ENWVAQYIEE (147 aa)). Residues H161, C196, E198, C200, H204, and M207 each coordinate Cu cation. Residue E198 participates in Mg(2+) binding.

This sequence belongs to the cytochrome c oxidase subunit 2 family. As to quaternary structure, component of the cytochrome c oxidase (complex IV, CIV), a multisubunit enzyme composed of a catalytic core of 3 subunits and several supernumerary subunits. The complex exists as a monomer or a dimer and forms supercomplexes (SCs) in the inner mitochondrial membrane with ubiquinol-cytochrome c oxidoreductase (cytochrome b-c1 complex, complex III, CIII). Cu cation serves as cofactor.

It is found in the mitochondrion inner membrane. The catalysed reaction is 4 Fe(II)-[cytochrome c] + O2 + 8 H(+)(in) = 4 Fe(III)-[cytochrome c] + 2 H2O + 4 H(+)(out). Functionally, component of the cytochrome c oxidase, the last enzyme in the mitochondrial electron transport chain which drives oxidative phosphorylation. The respiratory chain contains 3 multisubunit complexes succinate dehydrogenase (complex II, CII), ubiquinol-cytochrome c oxidoreductase (cytochrome b-c1 complex, complex III, CIII) and cytochrome c oxidase (complex IV, CIV), that cooperate to transfer electrons derived from NADH and succinate to molecular oxygen, creating an electrochemical gradient over the inner membrane that drives transmembrane transport and the ATP synthase. Cytochrome c oxidase is the component of the respiratory chain that catalyzes the reduction of oxygen to water. Electrons originating from reduced cytochrome c in the intermembrane space (IMS) are transferred via the dinuclear copper A center (CU(A)) of subunit 2 and heme A of subunit 1 to the active site in subunit 1, a binuclear center (BNC) formed by heme A3 and copper B (CU(B)). The BNC reduces molecular oxygen to 2 water molecules using 4 electrons from cytochrome c in the IMS and 4 protons from the mitochondrial matrix. The chain is Cytochrome c oxidase subunit 2 (COII) from Paracentrotus lividus (Common sea urchin).